The following is a 150-amino-acid chain: Large ribosomal subunit protein bL9 (150 aa).

It belongs to the bacterial ribosomal protein bL9 family.

Its function is as follows. Binds to the 23S rRNA. The polypeptide is Large ribosomal subunit protein bL9 (Streptococcus pyogenes serotype M2 (strain MGAS10270)).